The sequence spans 1011 residues: Lysosomal alpha-mannosidase (1011 aa).

The signal sequence occupies residues 1-49 (MGAYARASGVCARGCLDSAGPWTMSRALRPPLPPLCFFLLLLAAAGARA). Cystine bridges form between Cys-55-Cys-358 and Cys-268-Cys-273. His-72 and Asp-74 together coordinate Zn(2+). Residue Asn-133 is glycosylated (N-linked (GlcNAc...) asparagine). Residue Asp-196 coordinates Zn(2+). Catalysis depends on Asp-196, which acts as the Nucleophile. N-linked (GlcNAc...) asparagine glycosylation is found at Asn-310 and Asn-367. Cystine bridges form between Cys-412/Cys-472 and Cys-493/Cys-501. His-446 contacts Zn(2+). Asn-497, Asn-645, Asn-651, Asn-692, Asn-766, Asn-832, Asn-930, and Asn-989 each carry an N-linked (GlcNAc...) asparagine glycan.

Belongs to the glycosyl hydrolase 38 family. The cofactor is Zn(2+). Post-translationally, first processed into 3 peptides of 70 kDa, 42 kDa (D) and 13/15 kDa (E). The 70 kDa peptide is further processed into three peptides (A, B and C). The A, B and C peptides are disulfide-linked. In terms of processing, heavily glycosylated.

It is found in the lysosome. It catalyses the reaction Hydrolysis of terminal, non-reducing alpha-D-mannose residues in alpha-D-mannosides.. In terms of biological role, necessary for the catabolism of N-linked carbohydrates released during glycoprotein turnover. Cleaves all known types of alpha-mannosidic linkages. The protein is Lysosomal alpha-mannosidase (MAN2B1) of Homo sapiens (Human).